Consider the following 569-residue polypeptide: Probable pyruvate decarboxylase Pdc101 (569 aa).

Substrate-binding residues include Asp33 and His120. A Phosphoserine modification is found at Ser233. The thiamine pyrophosphate binding stretch occupies residues 396 to 478 (DSWFNGLQMK…FLLNNRGYTI (83 aa)). Residues Asp446, Asn473, and Gly475 each coordinate Mg(2+). Glu479 is a substrate binding site. Thr521 is subject to Phosphothreonine. The residue at position 522 (Ser522) is a Phosphoserine.

The protein belongs to the TPP enzyme family. Homotetramer. The cofactor is a metal cation. It depends on thiamine diphosphate as a cofactor.

The enzyme catalyses a 2-oxocarboxylate + H(+) = an aldehyde + CO2. This is Probable pyruvate decarboxylase Pdc101 (pdc101) from Schizosaccharomyces pombe (strain 972 / ATCC 24843) (Fission yeast).